The chain runs to 1119 residues: GATOR2 complex protein MIOS (1119 aa).

A WD 1 repeat occupies 3-43; sequence QSSTRKRLIQWSPHNKSSFIVGSNDLRLYNFKFKDKNEKKN. A disordered region spans residues 41–60; sequence KKNENNINNSNQYNQNNQQQ. The span at 45–60 shows a compositional bias: low complexity; that stretch reads NNINNSNQYNQNNQQQ. WD repeat units follow at residues 127 to 169, 183 to 227, 281 to 321, 324 to 364, and 368 to 409; these read KTIS…ILTS, KHTR…STTL, TQSE…SSQS, AHQK…DPLI, and SNCK…EFSK. The interval 413 to 455 is disordered; the sequence is LESTTLSTGGGGSGSNTSNNLNKRSTSNNNNSQDPINTISKPT. A compositionally biased stretch (low complexity) spans 427–444; it reads SNTSNNLNKRSTSNNNNS. One copy of the WD 7 repeat lies at 459 to 499; the sequence is HSSDVVSSFSWHPTNECRMLTVSYSGVIDVVSLNENIPISW. Positions 601–669 are disordered; sequence PSISTTTPGG…NNNNNNNNNN (69 aa). The segment at 973–1016 adopts a C4-type zinc-finger fold; the sequence is AKCGFCQNSFAFESISASSIVGRNASSKPNFKAKVPFCPHCKQS. Zn(2+)-binding residues include Cys975, Cys978, Cys1010, Cys1013, Cys1023, Cys1085, Cys1088, His1090, His1093, His1096, Cys1107, Cys1112, and Cys1116.

It belongs to the WD repeat mio family. As to quaternary structure, probably part of the GATOR complex.

It localises to the lysosome membrane. In terms of biological role, as a component of the GATOR complex may function in the amino acid-sensing branch of the TORC1 signaling pathway. The polypeptide is GATOR2 complex protein MIOS (Dictyostelium discoideum (Social amoeba)).